We begin with the raw amino-acid sequence, 344 residues long: sn-glycerol-3-phosphate import ATP-binding protein UgpC 2 (344 aa).

Residues 4–234 (IELIDLKKNY…PETVFVAGFI (231 aa)) form the ABC transporter domain. 36-43 (GPSGCGKS) serves as a coordination point for ATP.

It belongs to the ABC transporter superfamily. sn-glycerol-3-phosphate importer (TC 3.A.1.1.3) family. As to quaternary structure, the complex is composed of two ATP-binding proteins (UgpC), two transmembrane proteins (UgpA and UgpE) and a solute-binding protein (UgpB).

It is found in the cell inner membrane. The catalysed reaction is sn-glycerol 3-phosphate(out) + ATP + H2O = sn-glycerol 3-phosphate(in) + ADP + phosphate + H(+). Its function is as follows. Part of the ABC transporter complex UgpBAEC involved in sn-glycerol-3-phosphate (G3P) import. Responsible for energy coupling to the transport system. The protein is sn-glycerol-3-phosphate import ATP-binding protein UgpC 2 of Rhizobium johnstonii (strain DSM 114642 / LMG 32736 / 3841) (Rhizobium leguminosarum bv. viciae).